Consider the following 383-residue polypeptide: S-adenosylmethionine synthase (383 aa).

His16 lines the ATP pocket. Asp18 serves as a coordination point for Mg(2+). Glu44 provides a ligand contact to K(+). L-methionine is bound by residues Glu57 and Gln98. Residues 98–108 are flexible loop; that stretch reads QSPDIAMGVDI. ATP-binding positions include 158–160, 226–227, Asp235, 241–242, Ala258, and Lys262; these read DQK, RF, and RK. Asp235 serves as a coordination point for L-methionine. Lys266 contacts L-methionine.

It belongs to the AdoMet synthase family. As to quaternary structure, homotetramer; dimer of dimers. Mg(2+) is required as a cofactor. K(+) serves as cofactor.

Its subcellular location is the cytoplasm. It carries out the reaction L-methionine + ATP + H2O = S-adenosyl-L-methionine + phosphate + diphosphate. It participates in amino-acid biosynthesis; S-adenosyl-L-methionine biosynthesis; S-adenosyl-L-methionine from L-methionine: step 1/1. In terms of biological role, catalyzes the formation of S-adenosylmethionine (AdoMet) from methionine and ATP. The overall synthetic reaction is composed of two sequential steps, AdoMet formation and the subsequent tripolyphosphate hydrolysis which occurs prior to release of AdoMet from the enzyme. This chain is S-adenosylmethionine synthase, found in Fusobacterium nucleatum subsp. nucleatum (strain ATCC 25586 / DSM 15643 / BCRC 10681 / CIP 101130 / JCM 8532 / KCTC 2640 / LMG 13131 / VPI 4355).